A 542-amino-acid polypeptide reads, in one-letter code: Probable quinate permease (542 aa).

At 1–22 (MSILALVEDRPTPKEVYNWKIY) the chain is on the cytoplasmic side. A helical membrane pass occupies residues 23 to 43 (LLAAVASFTSCMIGYDSAFIG). The Extracellular portion of the chain corresponds to 44–74 (TTLALSSFREEFGFSTMSKTAVNLVSANIVS). The helical transmembrane segment at 75–95 (CYQAGAFFGAFFAYPIGHFWG) threads the bilayer. The Cytoplasmic portion of the chain corresponds to 96-97 (RK). The chain crosses the membrane as a helical span at residues 98–118 (WGLLFAGTIFTLGAGLMLGAN). Topologically, residues 119 to 130 (GDRGLGLLYGGR) are extracellular. The helical transmembrane segment at 131–151 (VLAGLGVGAGSNITPIYISEM) threads the bilayer. Residues 152 to 159 (APPSIRGR) lie on the Cytoplasmic side of the membrane. The chain crosses the membrane as a helical span at residues 160-180 (LVGVYELGWQIGGLVGFWINY). At 181-193 (GVSETLAPSHKQW) the chain is on the extracellular side. Residues 194–214 (IIPFAVQLIPSGLLLIGAVFL) traverse the membrane as a helical segment. Residues 215–285 (KESPRWLFSR…AGTNKKVMYR (71 aa)) are Cytoplasmic-facing. A helical transmembrane segment spans residues 286–306 (LFLGSMLFFWQNGSGINAINY). Topologically, residues 307-325 (YSPTVFKSIGLHGANTSMF) are extracellular. Residues 326 to 346 (STGIFGVVKTVVTFVWLLYLI) traverse the membrane as a helical segment. Residues 347–352 (DRLGRR) lie on the Cytoplasmic side of the membrane. A helical transmembrane segment spans residues 353–373 (LLLLIGAAGAAVCLLIVGAYI). Over 374 to 387 (KIADPASNPTQEMT) the chain is Extracellular. The helical transmembrane segment at 388–408 (GGGIAAMFFFYLYTVFYTPSW) threads the bilayer. At 409 to 456 (NGTPWVMNSEMFEPNMRSLAQACAAASNWLWNFLISRFTPQMFAKMEY) the chain is on the cytoplasmic side. Residues 457-477 (GVWFFFASLMLLSIVFVFFLV) traverse the membrane as a helical segment. At 478–542 (PETKGIPLES…EHVSEDLPKV (65 aa)) the chain is on the extracellular side. Positions 523–542 (GYSKTGEQQVEHVSEDLPKV) are disordered. Over residues 531–542 (QVEHVSEDLPKV) the composition is skewed to basic and acidic residues.

This sequence belongs to the major facilitator superfamily. Sugar transporter (TC 2.A.1.1) family. As to quaternary structure, interacts with creB. Post-translationally, ubiquitinated. Deubiquitinated by creB, probably to control its activity or amount.

The protein localises to the cell membrane. In terms of biological role, integral membrane transporter that imports quinic acid to be catabolized as a carbon source. This is Probable quinate permease (qutD) from Aspergillus fumigatus (strain CBS 144.89 / FGSC A1163 / CEA10) (Neosartorya fumigata).